The chain runs to 31 residues: GLLPCAESCVYIPCLTTVIGCSCKSKVCYKN.

The segment at residues 1-31 (GLLPCAESCVYIPCLTTVIGCSCKSKVCYKN) is a cross-link (cyclopeptide (Gly-Asn)). 3 cysteine pairs are disulfide-bonded: cysteine 5-cysteine 21, cysteine 9-cysteine 23, and cysteine 14-cysteine 28.

In terms of processing, this is a cyclic peptide.

Its function is as follows. Probably participates in a plant defense mechanism. Has cytotoxic activity, active against a human lymphoma cell line with an IC(50) of 1.6 uM. The sequence is that of Cyclotide vibi-H from Viola biflora (Yellow wood violet).